The primary structure comprises 289 residues: Toxin tox21A (289 aa).

An N-terminal signal peptide occupies residues M1–A14. A propeptide spanning residues A15–I27 is cleaved from the precursor. The interval D270 to C289 is disordered.

Contains several disulfide bonds. As to expression, posterior glands which appear to be connected with the stylet through a series of ducts.

It localises to the secreted. Has contracting-paralyzing activity in insect larvae. This is Toxin tox21A from Pyemotes tritici (Straw itch mite).